Consider the following 327-residue polypeptide: ATP-dependent 6-phosphofructokinase (327 aa).

Residues glycine 11, 72-73 (RS), and 102-105 (GDGS) contribute to the ATP site. Aspartate 103 contributes to the Mg(2+) binding site. Residue 127-129 (TID) coordinates substrate. Aspartate 129 (proton acceptor) is an active-site residue. Arginine 156 serves as a coordination point for ADP. Residues arginine 164 and 171–173 (MGR) each bind substrate. Position 187–189 (187–189 (GAE)) interacts with ADP. Substrate is bound by residues glutamate 224, arginine 245, and 251-254 (HIQR).

It belongs to the phosphofructokinase type A (PFKA) family. ATP-dependent PFK group I subfamily. Prokaryotic clade 'B1' sub-subfamily. As to quaternary structure, homotetramer. The cofactor is Mg(2+).

The protein resides in the cytoplasm. It carries out the reaction beta-D-fructose 6-phosphate + ATP = beta-D-fructose 1,6-bisphosphate + ADP + H(+). Its pathway is carbohydrate degradation; glycolysis; D-glyceraldehyde 3-phosphate and glycerone phosphate from D-glucose: step 3/4. Allosterically activated by ADP and other diphosphonucleosides, and allosterically inhibited by phosphoenolpyruvate. Its function is as follows. Catalyzes the phosphorylation of D-fructose 6-phosphate to fructose 1,6-bisphosphate by ATP, the first committing step of glycolysis. This Sulfurovum sp. (strain NBC37-1) protein is ATP-dependent 6-phosphofructokinase.